A 421-amino-acid polypeptide reads, in one-letter code: Bestrophin homolog 2 (421 aa).

4 helical membrane passes run 28-48, 73-93, 239-259, and 275-295; these read IWKA…IISV, LSFI…VDRW, LMYP…SIIA, and VYFP…LKVI.

The protein belongs to the anion channel-forming bestrophin (TC 1.A.46) family. Calcium-sensitive chloride channel subfamily. As to quaternary structure, forms oligomers.

The protein resides in the cell membrane. Its function is as follows. Forms chloride channels. This Caenorhabditis elegans protein is Bestrophin homolog 2 (best-2).